The primary structure comprises 836 residues: DNA gyrase subunit A (836 aa).

The 467-residue stretch at 34-500 (LPDARDGLKP…AGDVRDIEDI (467 aa)) folds into the Topo IIA-type catalytic domain. Tyr122 (O-(5'-phospho-DNA)-tyrosine intermediate) is an active-site residue. Positions 527–533 (QKRGGQG) match the GyrA-box motif.

This sequence belongs to the type II topoisomerase GyrA/ParC subunit family. As to quaternary structure, heterotetramer, composed of two GyrA and two GyrB chains. In the heterotetramer, GyrA contains the active site tyrosine that forms a transient covalent intermediate with DNA, while GyrB binds cofactors and catalyzes ATP hydrolysis.

The protein localises to the cytoplasm. The enzyme catalyses ATP-dependent breakage, passage and rejoining of double-stranded DNA.. Its function is as follows. A type II topoisomerase that negatively supercoils closed circular double-stranded (ds) DNA in an ATP-dependent manner to modulate DNA topology and maintain chromosomes in an underwound state. Negative supercoiling favors strand separation, and DNA replication, transcription, recombination and repair, all of which involve strand separation. Also able to catalyze the interconversion of other topological isomers of dsDNA rings, including catenanes and knotted rings. Type II topoisomerases break and join 2 DNA strands simultaneously in an ATP-dependent manner. The sequence is that of DNA gyrase subunit A from Chlamydia trachomatis serovar D (strain ATCC VR-885 / DSM 19411 / UW-3/Cx).